The sequence spans 190 residues: Holliday junction branch migration complex subunit RuvA (190 aa).

The interval 1-64 is domain I; that stretch reads MIGSLTGIIE…DNLTQLYGFL (64 aa). The interval 65–142 is domain II; that stretch reads DKQEQDYMRM…KMPIEETLII (78 aa). A region of interest (flexible linker) is located at residue lysine 143. The tract at residues 143–190 is domain III; sequence KEDDSLAALISLGYDKLKAFNAIQEIKSDFPNANIQEIIRKALQKLSQ.

Belongs to the RuvA family. Homotetramer. Forms an RuvA(8)-RuvB(12)-Holliday junction (HJ) complex. HJ DNA is sandwiched between 2 RuvA tetramers; dsDNA enters through RuvA and exits via RuvB. An RuvB hexamer assembles on each DNA strand where it exits the tetramer. Each RuvB hexamer is contacted by two RuvA subunits (via domain III) on 2 adjacent RuvB subunits; this complex drives branch migration. In the full resolvosome a probable DNA-RuvA(4)-RuvB(12)-RuvC(2) complex forms which resolves the HJ.

Its subcellular location is the cytoplasm. Functionally, the RuvA-RuvB-RuvC complex processes Holliday junction (HJ) DNA during genetic recombination and DNA repair, while the RuvA-RuvB complex plays an important role in the rescue of blocked DNA replication forks via replication fork reversal (RFR). RuvA specifically binds to HJ cruciform DNA, conferring on it an open structure. The RuvB hexamer acts as an ATP-dependent pump, pulling dsDNA into and through the RuvAB complex. HJ branch migration allows RuvC to scan DNA until it finds its consensus sequence, where it cleaves and resolves the cruciform DNA. In Ehrlichia canis (strain Jake), this protein is Holliday junction branch migration complex subunit RuvA.